Reading from the N-terminus, the 493-residue chain is Galactose-1-phosphate uridylyltransferase (493 aa).

It belongs to the galactose-1-phosphate uridylyltransferase type 2 family.

The protein resides in the cytoplasm. The enzyme catalyses alpha-D-galactose 1-phosphate + UDP-alpha-D-glucose = alpha-D-glucose 1-phosphate + UDP-alpha-D-galactose. Its pathway is carbohydrate metabolism; galactose metabolism. The chain is Galactose-1-phosphate uridylyltransferase (galT) from Streptococcus thermophilus.